The chain runs to 559 residues: 2-isopropylmalate synthase (559 aa).

Residues 33 to 307 form the Pyruvate carboxyltransferase domain; the sequence is PIWCSSDLRD…NPELDFSDID (275 aa). 4 residues coordinate Mg(2+): aspartate 42, histidine 246, histidine 248, and asparagine 282. Positions 439–559 are regulatory domain; that stretch reads ANTPYALVSH…SLSEQQAKAA (121 aa).

The protein belongs to the alpha-IPM synthase/homocitrate synthase family. LeuA type 2 subfamily. Homodimer. Mg(2+) serves as cofactor.

The protein resides in the cytoplasm. It catalyses the reaction 3-methyl-2-oxobutanoate + acetyl-CoA + H2O = (2S)-2-isopropylmalate + CoA + H(+). The protein operates within amino-acid biosynthesis; L-leucine biosynthesis; L-leucine from 3-methyl-2-oxobutanoate: step 1/4. Its function is as follows. Catalyzes the condensation of the acetyl group of acetyl-CoA with 3-methyl-2-oxobutanoate (2-ketoisovalerate) to form 3-carboxy-3-hydroxy-4-methylpentanoate (2-isopropylmalate). The sequence is that of 2-isopropylmalate synthase from Pseudomonas fluorescens (strain ATCC BAA-477 / NRRL B-23932 / Pf-5).